The chain runs to 129 residues: Fluoride-specific ion channel FluC (129 aa).

The next 4 membrane-spanning stretches (helical) occupy residues 8 to 28 (ILLV…VALW), 34 to 54 (AVFP…IGFI), 70 to 90 (IFLV…MIEH), and 102 to 122 (AALY…LGII). Residues glycine 78 and threonine 81 each coordinate Na(+).

Belongs to the fluoride channel Fluc/FEX (TC 1.A.43) family.

The protein localises to the cell inner membrane. It catalyses the reaction fluoride(in) = fluoride(out). With respect to regulation, na(+) is not transported, but it plays an essential structural role and its presence is essential for fluoride channel function. In terms of biological role, fluoride-specific ion channel. Important for reducing fluoride concentration in the cell, thus reducing its toxicity. This is Fluoride-specific ion channel FluC from Chlorobium chlorochromatii (strain CaD3).